Here is a 221-residue protein sequence, read N- to C-terminus: Sugar transporter SWEET1 (221 aa).

7 helical membrane passes run 3–23 (AGGV…LGMF), 44–63 (FLPF…YGVL), 68–88 (TLII…LAYL), 102–122 (ATLL…VPDL), 129–149 (LGLF…ADLA), 160–180 (LSFS…IYGF), and 186–206 (YITV…VLFY). Residues 10-94 (FLSSACVLFT…LAYLHYSPQK (85 aa)) enclose the MtN3/slv 1 domain. The 86-residue stretch at 127–212 (QQLGLFCSVF…VLFYKYPPEQ (86 aa)) folds into the MtN3/slv 2 domain. The mediates interaction with TRPV2 stretch occupies residues 149–221 (AKIIQTKSTQ…QDTKYRLLQT (73 aa)).

This sequence belongs to the SWEET sugar transporter family. In terms of assembly, interacts with TRPV2; the interaction probably occurs intracellularly and depends on TRPV2 N-glycosylation.

Its subcellular location is the golgi apparatus membrane. It is found in the cell membrane. Functionally, mediates sugar transport across membranes. May stimulate V(D)J recombination by the activation of RAG1. The polypeptide is Sugar transporter SWEET1 (Slc50a1) (Rattus norvegicus (Rat)).